The chain runs to 66 residues: Alpha-like toxin BeM9 (66 aa).

Residues 2-66 enclose the LCN-type CS-alpha/beta domain; it reads RDAYIAKPHN…VPIRIPGKCH (65 aa). 4 disulfides stabilise this stretch: Cys12–Cys65, Cys16–Cys38, Cys24–Cys48, and Cys28–Cys50.

This sequence belongs to the long (4 C-C) scorpion toxin superfamily. Sodium channel inhibitor family. Alpha subfamily. As to expression, expressed by the venom gland.

Its subcellular location is the secreted. Its function is as follows. Alpha toxins bind voltage-independently at site-3 of sodium channels (Nav) and inhibit the inactivation of the activated channels, thereby blocking neuronal transmission. This toxin is active on both mammals and insects, since it inhibits inactivation of rNav1.4/SCN4A, hNav1.5/SCN5A, mNav1.6/SCN8A and insect BgNav1 and DmNav1 channels. In vivo, it shows paralytic activity in mice. The protein is Alpha-like toxin BeM9 of Mesobuthus eupeus (Lesser Asian scorpion).